The chain runs to 218 residues: Protein-L-isoaspartate O-methyltransferase (218 aa).

Ser69 is an active-site residue.

This sequence belongs to the methyltransferase superfamily. L-isoaspartyl/D-aspartyl protein methyltransferase family.

Its subcellular location is the cytoplasm. It carries out the reaction [protein]-L-isoaspartate + S-adenosyl-L-methionine = [protein]-L-isoaspartate alpha-methyl ester + S-adenosyl-L-homocysteine. In terms of biological role, catalyzes the methyl esterification of L-isoaspartyl residues in peptides and proteins that result from spontaneous decomposition of normal L-aspartyl and L-asparaginyl residues. It plays a role in the repair and/or degradation of damaged proteins. This Aromatoleum aromaticum (strain DSM 19018 / LMG 30748 / EbN1) (Azoarcus sp. (strain EbN1)) protein is Protein-L-isoaspartate O-methyltransferase.